Consider the following 100-residue polypeptide: UPF0235 protein NE0395 (100 aa).

It belongs to the UPF0235 family.

This chain is UPF0235 protein NE0395, found in Nitrosomonas europaea (strain ATCC 19718 / CIP 103999 / KCTC 2705 / NBRC 14298).